The following is a 205-amino-acid chain: Cytochrome c biogenesis ATP-binding export protein CcmA 2 (205 aa).

The ABC transporter domain occupies 2 to 205 (LEARDLYCER…LALTGGGAGL (204 aa)). 34-41 (GGNGAGKT) provides a ligand contact to ATP.

It belongs to the ABC transporter superfamily. CcmA exporter (TC 3.A.1.107) family. The complex is composed of two ATP-binding proteins (CcmA) and two transmembrane proteins (CcmB).

It is found in the cell inner membrane. It catalyses the reaction heme b(in) + ATP + H2O = heme b(out) + ADP + phosphate + H(+). Part of the ABC transporter complex CcmAB involved in the biogenesis of c-type cytochromes; once thought to export heme, this seems not to be the case, but its exact role is uncertain. Responsible for energy coupling to the transport system. This chain is Cytochrome c biogenesis ATP-binding export protein CcmA 2, found in Salmonella typhimurium (strain LT2 / SGSC1412 / ATCC 700720).